The following is a 282-amino-acid chain: Bifunctional protein FolD (282 aa).

NADP(+) contacts are provided by residues 166 to 168 (GAS) and Ile232.

It belongs to the tetrahydrofolate dehydrogenase/cyclohydrolase family. In terms of assembly, homodimer.

The catalysed reaction is (6R)-5,10-methylene-5,6,7,8-tetrahydrofolate + NADP(+) = (6R)-5,10-methenyltetrahydrofolate + NADPH. The enzyme catalyses (6R)-5,10-methenyltetrahydrofolate + H2O = (6R)-10-formyltetrahydrofolate + H(+). Its pathway is one-carbon metabolism; tetrahydrofolate interconversion. Its function is as follows. Catalyzes the oxidation of 5,10-methylenetetrahydrofolate to 5,10-methenyltetrahydrofolate and then the hydrolysis of 5,10-methenyltetrahydrofolate to 10-formyltetrahydrofolate. The sequence is that of Bifunctional protein FolD from Haemophilus influenzae (strain PittEE).